Here is a 130-residue protein sequence, read N- to C-terminus: Histone H2B (130 aa).

The interval M1 to M31 is disordered. K122 is covalently cross-linked (Glycyl lysine isopeptide (Lys-Gly) (interchain with G-Cter in ubiquitin)).

The protein belongs to the histone H2B family. In terms of assembly, the nucleosome is a histone octamer containing two molecules each of H2A, H2B, H3 and H4 assembled in one H3-H4 heterotetramer and two H2A-H2B heterodimers. The octamer wraps approximately 147 bp of DNA. In terms of processing, monoubiquitinated to form H2BK123ub1. H2BK123ub1 gives a specific tag for epigenetic transcriptional activation and is also prerequisite for H3K4me and H3K79me formation.

It is found in the nucleus. It localises to the chromosome. Functionally, core component of nucleosome. Nucleosomes wrap and compact DNA into chromatin, limiting DNA accessibility to the cellular machineries which require DNA as a template. Histones thereby play a central role in transcription regulation, DNA repair, DNA replication and chromosomal stability. DNA accessibility is regulated via a complex set of post-translational modifications of histones, also called histone code, and nucleosome remodeling. This Encephalitozoon cuniculi (strain GB-M1) (Microsporidian parasite) protein is Histone H2B (HTB1).